Consider the following 288-residue polypeptide: Elongation factor Ts (288 aa).

Residues 82-85 (TDFV) form an involved in Mg(2+) ion dislocation from EF-Tu region.

Belongs to the EF-Ts family.

The protein resides in the cytoplasm. In terms of biological role, associates with the EF-Tu.GDP complex and induces the exchange of GDP to GTP. It remains bound to the aminoacyl-tRNA.EF-Tu.GTP complex up to the GTP hydrolysis stage on the ribosome. In Chlorobium phaeobacteroides (strain BS1), this protein is Elongation factor Ts.